We begin with the raw amino-acid sequence, 270 residues long: 3-methyl-2-oxobutanoate hydroxymethyltransferase (270 aa).

2 residues coordinate Mg(2+): aspartate 41 and aspartate 80. 3-methyl-2-oxobutanoate is bound by residues 41–42 (DS), aspartate 80, and lysine 109. Glutamate 111 is a binding site for Mg(2+). Glutamate 178 serves as the catalytic Proton acceptor.

It belongs to the PanB family. As to quaternary structure, homodecamer; pentamer of dimers. It depends on Mg(2+) as a cofactor.

The protein resides in the cytoplasm. The enzyme catalyses 3-methyl-2-oxobutanoate + (6R)-5,10-methylene-5,6,7,8-tetrahydrofolate + H2O = 2-dehydropantoate + (6S)-5,6,7,8-tetrahydrofolate. It participates in cofactor biosynthesis; (R)-pantothenate biosynthesis; (R)-pantoate from 3-methyl-2-oxobutanoate: step 1/2. In terms of biological role, catalyzes the reversible reaction in which hydroxymethyl group from 5,10-methylenetetrahydrofolate is transferred onto alpha-ketoisovalerate to form ketopantoate. This is 3-methyl-2-oxobutanoate hydroxymethyltransferase from Thermotoga sp. (strain RQ2).